A 966-amino-acid polypeptide reads, in one-letter code: Valine--tRNA ligase (966 aa).

The 'HIGH' region motif lies at 48-58 (PNITGGLHLGH). A coiled-coil region spans residues 348–368 (DYKDARKKIIEECKRLKILED). The 'KMSKS' region signature appears at 566-570 (KMSKS). Lysine 569 is an ATP binding site. Residues 939 to 960 (FKKSQEKLNHYNKTKNKLLNQY) are a coiled coil.

This sequence belongs to the class-I aminoacyl-tRNA synthetase family. ValS type 1 subfamily. Monomer.

It is found in the cytoplasm. It catalyses the reaction tRNA(Val) + L-valine + ATP = L-valyl-tRNA(Val) + AMP + diphosphate. Its function is as follows. Catalyzes the attachment of valine to tRNA(Val). As ValRS can inadvertently accommodate and process structurally similar amino acids such as threonine, to avoid such errors, it has a 'posttransfer' editing activity that hydrolyzes mischarged Thr-tRNA(Val) in a tRNA-dependent manner. The protein is Valine--tRNA ligase of Blochmanniella floridana.